We begin with the raw amino-acid sequence, 181 residues long: Probable GTP-binding protein EngB (181 aa).

The EngB-type G domain maps to 18–181; that stretch reads PKNEICFVGR…LQDLVNNLFN (164 aa). Residues 26-33, 52-56, 70-73, 137-140, and 164-166 each bind GTP; these read GRSNVGKS, GKTKL, DLPG, TKRD, and VSI. Mg(2+) is bound by residues Ser33 and Thr54.

It belongs to the TRAFAC class TrmE-Era-EngA-EngB-Septin-like GTPase superfamily. EngB GTPase family. The cofactor is Mg(2+).

Functionally, necessary for normal cell division and for the maintenance of normal septation. The sequence is that of Probable GTP-binding protein EngB from Mycoplasma mobile (strain ATCC 43663 / 163K / NCTC 11711) (Mesomycoplasma mobile).